A 351-amino-acid chain; its full sequence is Anthranilate phosphoribosyltransferase (351 aa).

Residues glycine 80, 83-84, threonine 88, 90-93, 108-116, and serine 120 each bind 5-phospho-alpha-D-ribose 1-diphosphate; these read GD, NIST, and KHGNRSVTS. Anthranilate is bound at residue glycine 80. Mg(2+) is bound at residue serine 92. Position 111 (asparagine 111) interacts with anthranilate. Position 166 (arginine 166) interacts with anthranilate. Mg(2+) contacts are provided by aspartate 229 and glutamate 230.

This sequence belongs to the anthranilate phosphoribosyltransferase family. As to quaternary structure, homodimer. Requires Mg(2+) as cofactor.

It catalyses the reaction N-(5-phospho-beta-D-ribosyl)anthranilate + diphosphate = 5-phospho-alpha-D-ribose 1-diphosphate + anthranilate. It functions in the pathway amino-acid biosynthesis; L-tryptophan biosynthesis; L-tryptophan from chorismate: step 2/5. Its function is as follows. Catalyzes the transfer of the phosphoribosyl group of 5-phosphorylribose-1-pyrophosphate (PRPP) to anthranilate to yield N-(5'-phosphoribosyl)-anthranilate (PRA). In Chlorobium limicola (strain DSM 245 / NBRC 103803 / 6330), this protein is Anthranilate phosphoribosyltransferase.